The chain runs to 139 residues: Transcription antitermination protein NusB (139 aa).

This sequence belongs to the NusB family.

In terms of biological role, involved in transcription antitermination. Required for transcription of ribosomal RNA (rRNA) genes. Binds specifically to the boxA antiterminator sequence of the ribosomal RNA (rrn) operons. In Sodalis glossinidius (strain morsitans), this protein is Transcription antitermination protein NusB.